We begin with the raw amino-acid sequence, 413 residues long: Serine hydroxymethyltransferase (413 aa).

Residues Leu-117 and 121–123 (GHL) contribute to the (6S)-5,6,7,8-tetrahydrofolate site. Lys-226 carries the post-translational modification N6-(pyridoxal phosphate)lysine. (6S)-5,6,7,8-tetrahydrofolate-binding positions include Glu-239 and 349–351 (SPF).

Belongs to the SHMT family. Homodimer. The cofactor is pyridoxal 5'-phosphate.

The protein resides in the cytoplasm. It catalyses the reaction (6R)-5,10-methylene-5,6,7,8-tetrahydrofolate + glycine + H2O = (6S)-5,6,7,8-tetrahydrofolate + L-serine. Its pathway is one-carbon metabolism; tetrahydrofolate interconversion. It participates in amino-acid biosynthesis; glycine biosynthesis; glycine from L-serine: step 1/1. In terms of biological role, catalyzes the reversible interconversion of serine and glycine with tetrahydrofolate (THF) serving as the one-carbon carrier. This reaction serves as the major source of one-carbon groups required for the biosynthesis of purines, thymidylate, methionine, and other important biomolecules. Also exhibits THF-independent aldolase activity toward beta-hydroxyamino acids, producing glycine and aldehydes, via a retro-aldol mechanism. This Bacillus cereus (strain AH820) protein is Serine hydroxymethyltransferase.